The primary structure comprises 472 residues: Carbohydrate sulfotransferase 3 (472 aa).

Residues 1-19 lie on the Cytoplasmic side of the membrane; sequence MEKGLALPQDFRDLVHSLK. The chain crosses the membrane as a helical; Signal-anchor for type II membrane protein span at residues 20–38; the sequence is IRGRYVLFLAFVVIVFIFI. Residues 39-472 lie on the Lumenal side of the membrane; that stretch reads EKENKIISRV…LEERGTFWVT (434 aa). Residues asparagine 63, asparagine 74, and asparagine 96 are each glycosylated (N-linked (GlcNAc...) asparagine). 3'-phosphoadenylyl sulfate is bound at residue 135 to 141; the sequence is TRTGSSF. A glycan (N-linked (GlcNAc...) asparagine) is linked at asparagine 250. 295–303 contacts 3'-phosphoadenylyl sulfate; the sequence is RDPRAVLAS. Residues asparagine 413 and asparagine 457 are each glycosylated (N-linked (GlcNAc...) asparagine).

Belongs to the sulfotransferase 1 family. Gal/GlcNAc/GalNAc subfamily. Post-translationally, N-glycosylated. Widely expressed. Highly expressed in spleen, lung, eye and stomach. Constitutively expressed at low level during the mid- to late-gestation period. Expressed in the brain in a temporally controlled manner: peaks at 2 weeks after birth in the cerebellum, but at 3 weeks in the cerebrum. Localizes to stromal cells in the bone marrow, and stromal cells in the marginal zone and red pulp of the spleen, but the sense probe did not.

It localises to the golgi apparatus membrane. The enzyme catalyses chondroitin beta-D-glucuronate + n 3'-phosphoadenylyl sulfate = chondroitin 6'-sulfate + n adenosine 3',5'-bisphosphate + n H(+). It carries out the reaction 3'-phosphoadenylyl sulfate + keratan = adenosine 3',5'-bisphosphate + keratan 6'-sulfate.. Its function is as follows. Sulfotransferase that utilizes 3'-phospho-5'-adenylyl sulfate (PAPS) as sulfonate donor to catalyze the transfer of sulfate to position 6 of the N-acetylgalactosamine (GalNAc) residue of chondroitin. Chondroitin sulfate constitutes the predominant proteoglycan present in cartilage and is distributed on the surfaces of many cells and extracellular matrices. Catalyzes with a lower efficiency the sulfation of Gal residues of keratan sulfate, another glycosaminoglycan. Can also catalyze the sulfation of the Gal residues in sialyl N-acetyllactosamine (sialyl LacNAc) oligosaccharides. May play a role in the maintenance of naive T-lymphocytes in the spleen. This Mus musculus (Mouse) protein is Carbohydrate sulfotransferase 3 (Chst3).